The primary structure comprises 165 residues: Dihydrofolate reductase type A13 (165 aa).

A DHFR domain is found at 7–162 (RIYLVAAMGA…ITYTHSVYAR (156 aa)).

The protein belongs to the dihydrofolate reductase family. Homodimer.

The catalysed reaction is (6S)-5,6,7,8-tetrahydrofolate + NADP(+) = 7,8-dihydrofolate + NADPH + H(+). Its pathway is cofactor biosynthesis; tetrahydrofolate biosynthesis; 5,6,7,8-tetrahydrofolate from 7,8-dihydrofolate: step 1/1. In terms of biological role, key enzyme in folate metabolism. Catalyzes an essential reaction for de novo glycine and purine synthesis, and for DNA precursor synthesis. The polypeptide is Dihydrofolate reductase type A13 (dfrA13) (Escherichia coli).